The chain runs to 363 residues: S-adenosylmethionine:tRNA ribosyltransferase-isomerase (363 aa).

It belongs to the QueA family. Monomer.

Its subcellular location is the cytoplasm. It carries out the reaction 7-aminomethyl-7-carbaguanosine(34) in tRNA + S-adenosyl-L-methionine = epoxyqueuosine(34) in tRNA + adenine + L-methionine + 2 H(+). Its pathway is tRNA modification; tRNA-queuosine biosynthesis. Transfers and isomerizes the ribose moiety from AdoMet to the 7-aminomethyl group of 7-deazaguanine (preQ1-tRNA) to give epoxyqueuosine (oQ-tRNA). The polypeptide is S-adenosylmethionine:tRNA ribosyltransferase-isomerase (Brucella abortus (strain S19)).